The sequence spans 184 residues: Flavodoxin FldP (184 aa).

A Flavodoxin-like domain is found at 4–176 (AVVVYFSGYG…TVKLYAARVA (173 aa)). FMN is bound by residues 10-14 (SGYGH) and 91-147 (GFTN…SVGA).

Belongs to the FldP flavodoxin family. The cofactor is FMN.

Functionally, flavodoxins are low-potential electron donors to a number of redox enzymes. FldP protects the cell from oxidative stress and reactive oxygen species (ROS) damage, thereby expanding the capabilities of P.aeruginosa to thrive in hostile environments, and contributes to bacterial survival within the host. In vitro, is able to mediate ferredoxin-NADP(H) reductase (FNR)-driven cytochrome c reduction. This Pseudomonas aeruginosa (strain UCBPP-PA14) protein is Flavodoxin FldP.